The primary structure comprises 205 residues: Thymidine kinase (205 aa).

Residues 9 to 16 (SAMNAGKS) and 87 to 90 (DECQ) each bind ATP. Glutamate 88 acts as the Proton acceptor in catalysis. Zn(2+) is bound by residues cysteine 145, cysteine 147, cysteine 182, and histidine 185.

This sequence belongs to the thymidine kinase family. As to quaternary structure, homotetramer.

It is found in the cytoplasm. It catalyses the reaction thymidine + ATP = dTMP + ADP + H(+). Its activity is regulated as follows. Allosteric enzyme which is feedback inhibited by dTTP and activated by a number of dNDP and dNTP. Functionally, phosphorylates both thymidine and deoxyuridine. The sequence is that of Thymidine kinase from Escherichia coli (strain K12).